Consider the following 140-residue polypeptide: PDZ domain-containing protein 11 (140 aa).

The PDZ domain maps to 47-129; that stretch reads IVTLKKPPGA…ISMRVRFFPY (83 aa).

Interacts with ATP2B1, ATP2B2, ATP2B3, ATP2B4 and ATP7A. Interacts with PLEKHA7 (via WW domains) at zonula adherens; this interaction is essential for the interaction between PLEKHA7 and the ADAM10-binding protein TSPAN33. Interacts with SLC5A6.

Its subcellular location is the cytoplasm. The protein resides in the cell junction. It is found in the adherens junction. The protein localises to the cell membrane. Mediates docking of ADAM10 to zonula adherens by interacting with PLEKHA7 which is required for PLEKHA7 to interact with the ADAM10-binding protein TSPAN33. In Mus musculus (Mouse), this protein is PDZ domain-containing protein 11 (Pdzd11).